We begin with the raw amino-acid sequence, 236 residues long: 2-C-methyl-D-erythritol 4-phosphate cytidylyltransferase (236 aa).

This sequence belongs to the IspD/TarI cytidylyltransferase family. IspD subfamily. Homodimer.

The catalysed reaction is 2-C-methyl-D-erythritol 4-phosphate + CTP + H(+) = 4-CDP-2-C-methyl-D-erythritol + diphosphate. It participates in isoprenoid biosynthesis; isopentenyl diphosphate biosynthesis via DXP pathway; isopentenyl diphosphate from 1-deoxy-D-xylulose 5-phosphate: step 2/6. Its function is as follows. Catalyzes the formation of 4-diphosphocytidyl-2-C-methyl-D-erythritol from CTP and 2-C-methyl-D-erythritol 4-phosphate (MEP). The protein is 2-C-methyl-D-erythritol 4-phosphate cytidylyltransferase of Salmonella paratyphi A (strain ATCC 9150 / SARB42).